The sequence spans 254 residues: Putative epimerase LsrE (254 aa).

The chain crosses the membrane as a helical span at residues 14-34 (VALLASYPLSVGILAGQWIAL). Positions 50, 52, and 81 each coordinate a divalent metal cation. The active-site Proton acceptor is Asp52. Substrate-binding positions include His81, 166–169 (GYGS), 199–201 (DGS), and 221–222 (GS). Asp199 serves as a coordination point for a divalent metal cation. Asp199 serves as the catalytic Proton donor.

The protein belongs to the ribulose-phosphate 3-epimerase family. Requires a divalent metal cation as cofactor.

Its subcellular location is the cell membrane. The sequence is that of Putative epimerase LsrE (lsrE) from Salmonella choleraesuis (strain SC-B67).